Consider the following 318-residue polypeptide: L-lactate dehydrogenase (318 aa).

NAD(+) contacts are provided by residues Val18, Asp39, Lys44, Tyr69, and 83-84; that span reads GA. The substrate site is built by Gln86 and Arg92. Residues Ser105, 122-124, and Ser147 contribute to the NAD(+) site; that span reads VSN. 124 to 127 lines the substrate pocket; sequence NPVD. 152 to 155 lines the substrate pocket; sequence DTSR. The Proton acceptor role is filled by His179. The residue at position 225 (Tyr225) is a Phosphotyrosine. Thr234 serves as a coordination point for substrate.

Belongs to the LDH/MDH superfamily. LDH family. Homotetramer.

The protein localises to the cytoplasm. It carries out the reaction (S)-lactate + NAD(+) = pyruvate + NADH + H(+). Its pathway is fermentation; pyruvate fermentation to lactate; (S)-lactate from pyruvate: step 1/1. Functionally, catalyzes the conversion of lactate to pyruvate. In Clostridium botulinum (strain 657 / Type Ba4), this protein is L-lactate dehydrogenase.